The sequence spans 135 residues: ATP synthase epsilon chain (135 aa).

Belongs to the ATPase epsilon chain family. F-type ATPases have 2 components, CF(1) - the catalytic core - and CF(0) - the membrane proton channel. CF(1) has five subunits: alpha(3), beta(3), gamma(1), delta(1), epsilon(1). CF(0) has three main subunits: a, b and c.

It localises to the cell inner membrane. Its function is as follows. Produces ATP from ADP in the presence of a proton gradient across the membrane. The sequence is that of ATP synthase epsilon chain from Brucella suis (strain ATCC 23445 / NCTC 10510).